Consider the following 535-residue polypeptide: Glutamyl-tRNA reductase 3, chloroplastic (535 aa).

Cysteine 131 serves as the catalytic Nucleophile. Residues 131–133, serine 190, 195–197, and glutamine 201 contribute to the substrate site; these read CNR and EGQ. Residue 272 to 277 coordinates NADP(+); sequence GAGKMG.

It belongs to the glutamyl-tRNA reductase family. As to expression, primarily expressed in roots.

The protein localises to the plastid. It is found in the chloroplast. It catalyses the reaction (S)-4-amino-5-oxopentanoate + tRNA(Glu) + NADP(+) = L-glutamyl-tRNA(Glu) + NADPH + H(+). It functions in the pathway porphyrin-containing compound metabolism; protoporphyrin-IX biosynthesis; 5-aminolevulinate from L-glutamyl-tRNA(Glu): step 1/2. In terms of biological role, catalyzes the NADPH-dependent reduction of glutamyl-tRNA(Glu) to glutamate 1-semialdehyde (GSA). This chain is Glutamyl-tRNA reductase 3, chloroplastic (HEMA3), found in Hordeum vulgare (Barley).